The chain runs to 143 residues: Deoxyuridine 5'-triphosphate nucleotidohydrolase (143 aa).

Residues Ser65, Val78, Arg132, and Gly138 each coordinate dUMP.

Belongs to the dUTPase family. Homotrimer. It depends on Mg(2+) as a cofactor.

The enzyme catalyses dUTP + H2O = dUMP + diphosphate + H(+). Its pathway is pyrimidine metabolism; dUMP biosynthesis; dUMP from dCTP (dUTP route): step 2/2. Functionally, involved in nucleotide metabolism via production of dUMP, the immediate precursor of thymidine nucleotides, and decreases the intracellular concentration of dUTP so that uracil cannot be incorporated into DNA. This Antonospora locustae (Microsporidian parasite) protein is Deoxyuridine 5'-triphosphate nucleotidohydrolase (DUT1).